A 329-amino-acid chain; its full sequence is Glycosyltransferase family protein 64 C3 (329 aa).

A signal peptide spans Met-1–Gly-27. Residue Asn-99 is glycosylated (N-linked (GlcNAc...) asparagine). Residues Ser-118–Arg-123, Asp-139–Asp-141, Arg-169, Arg-226–Asp-230, and Val-271–Arg-284 contribute to the substrate site. Asp-141 provides a ligand contact to Mn(2+). Cys-228 and Cys-287 are joined by a disulfide. Asp-230 is an active-site residue. Positions Val-268–Arg-284 are substrate binding.

The protein belongs to the glycosyltransferase 64 family. It depends on Mn(2+) as a cofactor.

The protein operates within protein modification; protein glycosylation. Its function is as follows. Probable glycosyltransferase. The chain is Glycosyltransferase family protein 64 C3 from Arabidopsis thaliana (Mouse-ear cress).